The chain runs to 264 residues: Thymidylate synthase (264 aa).

Residues arginine 21 and 126-127 (RR) each bind dUMP. Residue cysteine 146 is the Nucleophile of the active site. Residues 166-169 (RSAD), asparagine 177, and 207-209 (HLY) each bind dUMP. Aspartate 169 is a (6R)-5,10-methylene-5,6,7,8-tetrahydrofolate binding site. Alanine 263 lines the (6R)-5,10-methylene-5,6,7,8-tetrahydrofolate pocket.

Belongs to the thymidylate synthase family. Bacterial-type ThyA subfamily. As to quaternary structure, homodimer.

It localises to the cytoplasm. The enzyme catalyses dUMP + (6R)-5,10-methylene-5,6,7,8-tetrahydrofolate = 7,8-dihydrofolate + dTMP. Its pathway is pyrimidine metabolism; dTTP biosynthesis. Catalyzes the reductive methylation of 2'-deoxyuridine-5'-monophosphate (dUMP) to 2'-deoxythymidine-5'-monophosphate (dTMP) while utilizing 5,10-methylenetetrahydrofolate (mTHF) as the methyl donor and reductant in the reaction, yielding dihydrofolate (DHF) as a by-product. This enzymatic reaction provides an intracellular de novo source of dTMP, an essential precursor for DNA biosynthesis. In Bradyrhizobium diazoefficiens (strain JCM 10833 / BCRC 13528 / IAM 13628 / NBRC 14792 / USDA 110), this protein is Thymidylate synthase.